The following is a 208-amino-acid chain: Protein GrpE (208 aa).

The span at 1–12 shows a compositional bias: basic and acidic residues; the sequence is MTNKDESVEKNT. The segment at 1 to 51 is disordered; sequence MTNKDESVEKNTESTVEETNVKQNIDDSVEQAEESKGHLQDEAIEETSDEN. Positions 13–23 are enriched in polar residues; the sequence is ESTVEETNVKQ. A compositionally biased stretch (acidic residues) spans 42 to 51; that stretch reads EAIEETSDEN.

It belongs to the GrpE family. Homodimer.

The protein resides in the cytoplasm. Functionally, participates actively in the response to hyperosmotic and heat shock by preventing the aggregation of stress-denatured proteins, in association with DnaK and GrpE. It is the nucleotide exchange factor for DnaK and may function as a thermosensor. Unfolded proteins bind initially to DnaJ; upon interaction with the DnaJ-bound protein, DnaK hydrolyzes its bound ATP, resulting in the formation of a stable complex. GrpE releases ADP from DnaK; ATP binding to DnaK triggers the release of the substrate protein, thus completing the reaction cycle. Several rounds of ATP-dependent interactions between DnaJ, DnaK and GrpE are required for fully efficient folding. In Staphylococcus aureus (strain USA300), this protein is Protein GrpE.